The primary structure comprises 131 residues: Large ribosomal subunit protein eL14 (131 aa).

This sequence belongs to the eukaryotic ribosomal protein eL14 family. In terms of assembly, component of the large ribosomal subunit. Mature ribosomes consist of a small (40S) and a large (60S) subunit. The 40S subunit contains about 32 different proteins and 1 molecule of RNA (18S). The 60S subunit contains 45 different proteins and 3 molecules of RNA (25S, 5.8S and 5S).

Its subcellular location is the cytoplasm. Its function is as follows. Component of the ribosome, a large ribonucleoprotein complex responsible for the synthesis of proteins in the cell. The small ribosomal subunit (SSU) binds messenger RNAs (mRNAs) and translates the encoded message by selecting cognate aminoacyl-transfer RNA (tRNA) molecules. The large subunit (LSU) contains the ribosomal catalytic site termed the peptidyl transferase center (PTC), which catalyzes the formation of peptide bonds, thereby polymerizing the amino acids delivered by tRNAs into a polypeptide chain. The nascent polypeptides leave the ribosome through a tunnel in the LSU and interact with protein factors that function in enzymatic processing, targeting, and the membrane insertion of nascent chains at the exit of the ribosomal tunnel. The chain is Large ribosomal subunit protein eL14 from Candida albicans (strain SC5314 / ATCC MYA-2876) (Yeast).